Here is a 468-residue protein sequence, read N- to C-terminus: Ribulose bisphosphate carboxylase large chain (468 aa).

Position 5 is an N6,N6,N6-trimethyllysine (K5). Positions 114 and 164 each coordinate substrate. The active-site Proton acceptor is the K166. Substrate is bound at residue K168. 3 residues coordinate Mg(2+): K192, D194, and E195. K192 is modified (N6-carboxylysine). H285 serves as the catalytic Proton acceptor. Residues R286, H318, and S370 each contribute to the substrate site.

The protein belongs to the RuBisCO large chain family. Type I subfamily. In terms of assembly, heterohexadecamer of 8 large chains and 8 small chains; disulfide-linked. The disulfide link is formed within the large subunit homodimers. Mg(2+) is required as a cofactor. The disulfide bond which can form in the large chain dimeric partners within the hexadecamer appears to be associated with oxidative stress and protein turnover.

The protein localises to the plastid. The protein resides in the chloroplast. It carries out the reaction 2 (2R)-3-phosphoglycerate + 2 H(+) = D-ribulose 1,5-bisphosphate + CO2 + H2O. The enzyme catalyses D-ribulose 1,5-bisphosphate + O2 = 2-phosphoglycolate + (2R)-3-phosphoglycerate + 2 H(+). In terms of biological role, ruBisCO catalyzes two reactions: the carboxylation of D-ribulose 1,5-bisphosphate, the primary event in carbon dioxide fixation, as well as the oxidative fragmentation of the pentose substrate in the photorespiration process. Both reactions occur simultaneously and in competition at the same active site. This is Ribulose bisphosphate carboxylase large chain from Anthospermum herbaceum.